The chain runs to 421 residues: 3-isopropylmalate dehydratase large subunit (421 aa).

Residues C302, C362, and C365 each contribute to the [4Fe-4S] cluster site.

The protein belongs to the aconitase/IPM isomerase family. LeuC type 2 subfamily. As to quaternary structure, heterodimer of LeuC and LeuD. It depends on [4Fe-4S] cluster as a cofactor.

The catalysed reaction is (2R,3S)-3-isopropylmalate = (2S)-2-isopropylmalate. It functions in the pathway amino-acid biosynthesis; L-leucine biosynthesis; L-leucine from 3-methyl-2-oxobutanoate: step 2/4. In terms of biological role, catalyzes the isomerization between 2-isopropylmalate and 3-isopropylmalate, via the formation of 2-isopropylmaleate. In Campylobacter curvus (strain 525.92), this protein is 3-isopropylmalate dehydratase large subunit.